A 100-amino-acid chain; its full sequence is Urease subunit gamma (100 aa).

Belongs to the urease gamma subunit family. In terms of assembly, heterotrimer of UreA (gamma), UreB (beta) and UreC (alpha) subunits. Three heterotrimers associate to form the active enzyme.

Its subcellular location is the cytoplasm. The catalysed reaction is urea + 2 H2O + H(+) = hydrogencarbonate + 2 NH4(+). Its pathway is nitrogen metabolism; urea degradation; CO(2) and NH(3) from urea (urease route): step 1/1. The chain is Urease subunit gamma from Alcanivorax borkumensis (strain ATCC 700651 / DSM 11573 / NCIMB 13689 / SK2).